A 671-amino-acid chain; its full sequence is Zinc finger and BTB domain-containing protein 16-A (671 aa).

Residues 34 to 96 (CDVVIMVDSQ…AYTATLQAKV (63 aa)) form the BTB domain. 2 disordered regions span residues 130 to 167 (ENDTEVNMNDGGTEDDEERKGRHGRNLVGSKKHSTEES) and 248 to 289 (VDES…RSSV). The span at 270–279 (RSGEPDKNRD) shows a compositional bias: basic and acidic residues. The residue at position 283 (Thr-283) is a Phosphothreonine. 9 consecutive C2H2-type zinc fingers follow at residues 401–423 (ERCNVCGAELPDNEAIEQHRKLH), 429–451 (YGCELCGKRFLDSLRLRMHLLSH), 458–480 (IVCDQCGAQFQKEDALEAHRQIH), 487–509 (IFCLLCGKRFQTQTALQQHMEVH), 515–537 (YICSECNRTFPSHTALKRHLRSH), 544–566 (FECEFCGSCFRDESTLKGHKRIH), 572–594 (YECNGCGKKFSLKHQLETHYRVH), 600–622 (FECKLCHQRSRDYSAMIKHLRTH), and 628–650 (YQCTICLEYCPSLSAMQKHMKGH).

It belongs to the krueppel C2H2-type zinc-finger protein family. In terms of assembly, interacts with btbd6a (via BTB domain). In terms of processing, polyubiquitinated, leading to its proteasomal degradation. As to expression, during early stages of primary neurogenesis, expressed in the neural epithelium, with highest levels in the forebrain and midbrain. Also expressed in a posterior-to-anterior gradient in the caudal neural plate at the 3-6 somite stage.

It localises to the nucleus. It is found in the cytoplasm. It participates in protein modification; protein ubiquitination. Its function is as follows. Probable transcription factor. Probable substrate-recognition component of an E3 ubiquitin-protein ligase complex which mediates the ubiquitination and subsequent proteasomal degradation of target proteins. Inhibits neurogenesis. The protein is Zinc finger and BTB domain-containing protein 16-A of Danio rerio (Zebrafish).